The following is a 336-amino-acid chain: Phospho-N-acetylmuramoyl-pentapeptide-transferase (336 aa).

The next 10 helical transmembrane spans lie at 3–23 (LTLI…PYFI), 53–73 (GGTV…LFSI), 78–98 (SLAL…IGFL), 118–138 (LALQ…PSGI), 143–163 (VFGY…FWVV), 174–194 (GIDG…GVIA), 200–220 (FDVL…FCFN), 226–246 (VFMG…ISIA), 254–274 (LIIG…VFYF), and 316–336 (AFLW…LYVF).

Belongs to the glycosyltransferase 4 family. MraY subfamily. It depends on Mg(2+) as a cofactor.

Its subcellular location is the cell membrane. It catalyses the reaction UDP-N-acetyl-alpha-D-muramoyl-L-alanyl-gamma-D-glutamyl-L-lysyl-D-alanyl-D-alanine + di-trans,octa-cis-undecaprenyl phosphate = Mur2Ac(oyl-L-Ala-gamma-D-Glu-L-Lys-D-Ala-D-Ala)-di-trans,octa-cis-undecaprenyl diphosphate + UMP. It functions in the pathway cell wall biogenesis; peptidoglycan biosynthesis. Catalyzes the initial step of the lipid cycle reactions in the biosynthesis of the cell wall peptidoglycan: transfers peptidoglycan precursor phospho-MurNAc-pentapeptide from UDP-MurNAc-pentapeptide onto the lipid carrier undecaprenyl phosphate, yielding undecaprenyl-pyrophosphoryl-MurNAc-pentapeptide, known as lipid I. This Streptococcus pyogenes serotype M18 (strain MGAS8232) protein is Phospho-N-acetylmuramoyl-pentapeptide-transferase.